The chain runs to 126 residues: uncharacterized protein (126 aa).

The region spanning 4-126 (RIDHTGIMVR…DGEWIEFFQR (123 aa)) is the VOC domain. Positions 7, 42, 74, and 122 each coordinate a divalent metal cation.

The protein belongs to the glyoxalase I family.

This is an uncharacterized protein from Bacillus subtilis (strain 168).